We begin with the raw amino-acid sequence, 98 residues long: HssA/B-like protein 33 (98 aa).

Disordered stretches follow at residues 1 to 29 and 60 to 98; these read MTLFSSISSMSSSMTSSRSSFSSFGSGTS and AKSSGGSCGGKGGPHNHGHGNGHGPHGHGGKGSGGSCSC. Gly residues predominate over residues 60–72; the sequence is AKSSGGSCGGKGG. Residues 73–88 are compositionally biased toward basic residues; the sequence is PHNHGHGNGHGPHGHG. Residues 89–98 are compositionally biased toward gly residues; it reads GKGSGGSCSC.

It belongs to the hssA/B family.

This Dictyostelium discoideum (Social amoeba) protein is HssA/B-like protein 33 (hssl33).